The chain runs to 118 residues: Elicitin (118 aa).

Positions methionine 1–alanine 20 are cleaved as a signal peptide. Intrachain disulfides connect cysteine 23-cysteine 91, cysteine 47-cysteine 76, and cysteine 71-cysteine 115.

It belongs to the elicitin family.

Its subcellular location is the secreted. Induces local and distal defense responses (incompatible hypersensitive reaction) in plants from the solanaceae and cruciferae families. Elicits leaf necrosis and causes the accumulation of pathogenesis-related proteins. Might interact with the lipidic molecules of the plasma membrane. The sequence is that of Elicitin (PARA1) from Phytophthora nicotianae (Potato buckeye rot agent).